The sequence spans 412 residues: Transcription factor IIIA (412 aa).

The C2H2-type 1; degenerate zinc-finger motif lies at 20–43 (YLCQYCGISRSKNYLITKHIQSHH). 3 consecutive C2H2-type zinc fingers follow at residues 66–88 (HTCQ…MQSH), 94–118 (FTCY…LLTH), and 123–148 (FKCP…KKYH). The segment at 144 to 207 (VKKYHSNDNR…NGNGDSQPAE (64 aa)) is disordered. Basic and acidic residues predominate over residues 148–188 (HSNDNRDKDNTGLGDGDKDNTCKGDDDKEKSGSGGCEKENE). A Glycyl lysine isopeptide (Lys-Gly) (interchain with G-Cter in ubiquitin) cross-link involves residue lysine 185. Residues 215–239 (VVCKEIGCGKAFKYPSQLQKHQDSH) form a C2H2-type 5 zinc finger. The C2H2-type 6; degenerate zinc finger occupies 247–272 (AFCSEPGCMKYFTNEECLKSHIRSCH). The C2H2-type 7; degenerate zinc-finger motif lies at 275–296 (INCEICGSKHLKKNIKRHLRTH). Residues 305–330 (IKCEVEGCSSTFSKASNLQKHMKAVH) form a C2H2-type 8 zinc finger. A C2H2-type 9; degenerate zinc finger spans residues 336-362 (FVCGFPGCGMRFAYKHVRNKHENSGYH). The Nuclear localization signal signature appears at 384–391 (LKRKQVTA).

Protein product TFIIIA (44 kDa) is proteolytically cleaved into TFIIIA-C (34 kDa). Expressed in seedlings, flowers, siliques and seeds.

Its subcellular location is the nucleus. It localises to the nucleolus. Functionally, essential protein. Isoform 1 is a transcription activator the binds both 5S rDNA and 5S rRNA and stimulates the transcription of 5S rRNA gene. Isoform 1 regulates 5S rRNA levels during development. The chain is Transcription factor IIIA from Arabidopsis thaliana (Mouse-ear cress).